The following is a 330-amino-acid chain: PTS system mannose-specific EIIAB component (330 aa).

A PTS EIIA type-4 domain is found at 2 to 130 (GIGIIIASHG…NIIKESKDGI (129 aa)). Catalysis depends on His10, which acts as the Tele-phosphohistidine intermediate; for EIIA activity. At His10 the chain carries Phosphohistidine; by HPr. Positions 143–161 (TAATEKVVNALQGAIPAGT) are hinge. One can recognise a PTS EIIB type-4 domain in the interval 166 to 330 (GKLKINLARV…FELIQKANIK (165 aa)). His181 (pros-phosphohistidine intermediate; for EIIB activity) is an active-site residue. Phosphohistidine; by EIIA is present on His181.

In terms of assembly, homodimer.

The protein localises to the cytoplasm. It localises to the cell membrane. It catalyses the reaction D-mannose(out) + N(pros)-phospho-L-histidyl-[protein] = D-mannose 6-phosphate(in) + L-histidyl-[protein]. In terms of biological role, the phosphoenolpyruvate-dependent sugar phosphotransferase system (sugar PTS), a major carbohydrate active transport system, catalyzes the phosphorylation of incoming sugar substrates concomitantly with their translocation across the cell membrane. The enzyme II ManXYZ PTS system is involved in mannose transport. In Streptococcus pyogenes serotype M6 (strain ATCC BAA-946 / MGAS10394), this protein is PTS system mannose-specific EIIAB component.